A 206-amino-acid polypeptide reads, in one-letter code: 2,3-bisphosphoglycerate-dependent phosphoglycerate mutase (206 aa).

Residues 9–16 (RHGQSEWN), 22–23 (TG), Arg-61, 88–91 (ERNY), Lys-99, 115–116 (RR), and 159–160 (GN) contribute to the substrate site. The active-site Tele-phosphohistidine intermediate is the His-10. Glu-88 functions as the Proton donor/acceptor in the catalytic mechanism.

It belongs to the phosphoglycerate mutase family. BPG-dependent PGAM subfamily. Homodimer.

It carries out the reaction (2R)-2-phosphoglycerate = (2R)-3-phosphoglycerate. It functions in the pathway carbohydrate degradation; glycolysis; pyruvate from D-glyceraldehyde 3-phosphate: step 3/5. Functionally, catalyzes the interconversion of 2-phosphoglycerate and 3-phosphoglycerate. The chain is 2,3-bisphosphoglycerate-dependent phosphoglycerate mutase from Bartonella tribocorum (strain CIP 105476 / IBS 506).